We begin with the raw amino-acid sequence, 367 residues long: Inactive serine protease 39 (367 aa).

The signal sequence occupies residues 1–31 (MWGSRAQQSGPDRGGACLLAAFLLCFSLLHA). Residues 68–312 (IYGGQIAKAE…FSDWIKQKKA (245 aa)) enclose the Peptidase S1 domain. Intrachain disulfides connect Cys93-Cys109, Cys192-Cys269, Cys225-Cys248, and Cys259-Cys287.

This sequence belongs to the peptidase S1 family. Expressed in testis. More specifically, abundantly expressed in the haploid round spermatid.

It localises to the cytoplasmic vesicle. The protein localises to the secretory vesicle. Its subcellular location is the acrosome. The protein resides in the secreted. Its function is as follows. May play an important role in the sperm/egg interaction; released during the acrosome reaction. This Mus musculus (Mouse) protein is Inactive serine protease 39 (Prss39).